A 360-amino-acid polypeptide reads, in one-letter code: UPF0496 protein At3g19250 (360 aa).

The disordered stretch occupies residues 1-29; sequence MPHCFTFKPASPEGSLGDDHLPHPSPEGS. Helical transmembrane passes span 205–225 and 229–249; these read HHATAGSALCLVTAVVVVAAS and IAYHALPTILVVAGPLCTPYL.

Belongs to the UPF0496 family.

Its subcellular location is the membrane. In Arabidopsis thaliana (Mouse-ear cress), this protein is UPF0496 protein At3g19250.